Reading from the N-terminus, the 267-residue chain is tRNA pseudouridine synthase A (267 aa).

The active-site Nucleophile is Asp51. Tyr109 is a binding site for substrate.

This sequence belongs to the tRNA pseudouridine synthase TruA family. Homodimer.

It carries out the reaction uridine(38/39/40) in tRNA = pseudouridine(38/39/40) in tRNA. Its function is as follows. Formation of pseudouridine at positions 38, 39 and 40 in the anticodon stem and loop of transfer RNAs. In Staphylococcus saprophyticus subsp. saprophyticus (strain ATCC 15305 / DSM 20229 / NCIMB 8711 / NCTC 7292 / S-41), this protein is tRNA pseudouridine synthase A.